We begin with the raw amino-acid sequence, 1192 residues long: MAFLTALFLFLFFSFSSSAIVDLSSETTSLISFKRSLENPSLLSSWNVSSSASHCDWVGVTCLLGRVNSLSLPSLSLRGQIPKEISSLKNLRELCLAGNQFSGKIPPEIWNLKHLQTLDLSGNSLTGLLPRLLSELPQLLYLDLSDNHFSGSLPPSFFISLPALSSLDVSNNSLSGEIPPEIGKLSNLSNLYMGLNSFSGQIPSEIGNISLLKNFAAPSCFFNGPLPKEISKLKHLAKLDLSYNPLKCSIPKSFGELHNLSILNLVSAELIGLIPPELGNCKSLKSLMLSFNSLSGPLPLELSEIPLLTFSAERNQLSGSLPSWMGKWKVLDSLLLANNRFSGEIPHEIEDCPMLKHLSLASNLLSGSIPRELCGSGSLEAIDLSGNLLSGTIEEVFDGCSSLGELLLTNNQINGSIPEDLWKLPLMALDLDSNNFTGEIPKSLWKSTNLMEFTASYNRLEGYLPAEIGNAASLKRLVLSDNQLTGEIPREIGKLTSLSVLNLNANMFQGKIPVELGDCTSLTTLDLGSNNLQGQIPDKITALAQLQCLVLSYNNLSGSIPSKPSAYFHQIEMPDLSFLQHHGIFDLSYNRLSGPIPEELGECLVLVEISLSNNHLSGEIPASLSRLTNLTILDLSGNALTGSIPKEMGNSLKLQGLNLANNQLNGHIPESFGLLGSLVKLNLTKNKLDGPVPASLGNLKELTHMDLSFNNLSGELSSELSTMEKLVGLYIEQNKFTGEIPSELGNLTQLEYLDVSENLLSGEIPTKICGLPNLEFLNLAKNNLRGEVPSDGVCQDPSKALLSGNKELCGRVVGSDCKIEGTKLRSAWGIAGLMLGFTIIVFVFVFSLRRWAMTKRVKQRDDPERMEESRLKGFVDQNLYFLSGSRSREPLSINIAMFEQPLLKVRLGDIVEATDHFSKKNIIGDGGFGTVYKACLPGEKTVAVKKLSEAKTQGNREFMAEMETLGKVKHPNLVSLLGYCSFSEEKLLVYEYMVNGSLDHWLRNQTGMLEVLDWSKRLKIAVGAARGLAFLHHGFIPHIIHRDIKASNILLDGDFEPKVADFGLARLISACESHVSTVIAGTFGYIPPEYGQSARATTKGDVYSFGVILLELVTGKEPTGPDFKESEGGNLVGWAIQKINQGKAVDVIDPLLVSVALKNSQLRLLQIAMLCLAETPAKRPNMLDVLKALKEI.

An N-terminal signal peptide occupies residues 1–18 (MAFLTALFLFLFFSFSSS). An N-linked (GlcNAc...) asparagine glycan is attached at N47. LRR repeat units lie at residues 64 to 87 (LGRVNSLSLPSLSLRGQIPKEISS), 90 to 112 (NLRELCLAGNQFSGKIPPEIWNL), 114 to 137 (HLQTLDLSGNSLTGLLPRLLSELP), 138 to 160 (QLLYLDLSDNHFSGSLPPSFFIS), 163 to 185 (ALSSLDVSNNSLSGEIPPEIGKL), 187 to 209 (NLSNLYMGLNSFSGQIPSEIGNI), 235 to 257 (HLAKLDLSYNPLKCSIPKSFGEL), 259 to 281 (NLSILNLVSAELIGLIPPELGNC), 283 to 304 (SLKSLMLSFNSLSGPLPLELSE), 330 to 352 (VLDSLLLANNRFSGEIPHEIEDC), 354 to 376 (MLKHLSLASNLLSGSIPRELCGS), 378 to 400 (SLEAIDLSGNLLSGTIEEVFDGC), 402 to 425 (SLGELLLTNNQINGSIPEDLWKLP), 426 to 447 (LMALDLDSNNFTGEIPKSLWKS), 449 to 471 (NLMEFTASYNRLEGYLPAEIGNA), 473 to 496 (SLKRLVLSDNQLTGEIPREIGKLT), 497 to 520 (SLSVLNLNANMFQGKIPVELGDCT), 521 to 543 (SLTTLDLGSNNLQGQIPDKITAL), 545 to 567 (QLQCLVLSYNNLSGSIPSKPSAY), 581 to 603 (HHGIFDLSYNRLSGPIPEELGEC), 605 to 628 (VLVEISLSNNHLSGEIPASLSRLT), 629 to 651 (NLTILDLSGNALTGSIPKEMGNS), 653 to 675 (KLQGLNLANNQLNGHIPESFGLL), 677 to 697 (SLVKLNLTKNKLDGPVPASLG), 701 to 723 (ELTHMDLSFNNLSGELSSELSTM), 725 to 748 (KLVGLYIEQNKFTGEIPSELGNLT), 749 to 772 (QLEYLDVSENLLSGEIPTKICGLP), and 773 to 795 (NLEFLNLAKNNLRGEVPSDGVCQ). Residues N171, N187, and N208 are each glycosylated (N-linked (GlcNAc...) asparagine). The N-linked (GlcNAc...) asparagine glycan is linked to N259. 2 N-linked (GlcNAc...) asparagine glycosylation sites follow: N414 and N435. A glycan (N-linked (GlcNAc...) asparagine) is linked at N555. N629 carries N-linked (GlcNAc...) asparagine glycosylation. N682, N711, and N746 each carry an N-linked (GlcNAc...) asparagine glycan. A helical transmembrane segment spans residues 828-848 (WGIAGLMLGFTIIVFVFVFSL). The residue at position 914 (T914) is a Phosphothreonine. A Protein kinase domain is found at 917–1192 (FSKKNIIGDG…LDVLKALKEI (276 aa)). Residues 923-931 (IGDGGFGTV) and K945 contribute to the ATP site. Position 990 is a phosphotyrosine (Y990). The active-site Proton acceptor is the D1043. A Phosphotyrosine modification is found at Y1085.

The protein belongs to the protein kinase superfamily. Ser/Thr protein kinase family. As to quaternary structure, interacts with TPD1. Autophosphorylates in vitro. Present in young buds, open flowers and siliques but absent from mature leaves and roots. Strongly expressed in the young organ primordia, and as the anthers and ovules developed, became focused in the microsporangia and in the distal and chalazal regions of the ovule. In cv. Landsberg erecta, only expressed in the anthers of young floral buds.

It is found in the cell membrane. The catalysed reaction is L-seryl-[protein] + ATP = O-phospho-L-seryl-[protein] + ADP + H(+). It carries out the reaction L-threonyl-[protein] + ATP = O-phospho-L-threonyl-[protein] + ADP + H(+). Its function is as follows. Receptor with a serine/threonine-protein kinase activity required for the specification of the correct number of male archesporial initials and for the subsequent specification of tapetal and middle cell layer identities. In seeds, required for enhancing cell size and the rate of embryonic development. This is Leucine-rich repeat receptor protein kinase EMS1 from Arabidopsis thaliana (Mouse-ear cress).